The sequence spans 319 residues: Protein-methionine-sulfoxide reductase catalytic subunit MsrP (319 aa).

Positions 1–40 form a signal peptide, tat-type signal; sequence MHKLNENDVTPEHIFFERRKIIQSMGLMGAASLLPRFSLA. Mo-molybdopterin is bound by residues Asn73, 76 to 77, Cys131, Thr166, Asn218, Arg223, and 234 to 236; these read YE and NIK.

Belongs to the MsrP family. In terms of assembly, heterodimer of a catalytic subunit (MsrP) and a heme-binding subunit (MsrQ). Mo-molybdopterin serves as cofactor. Post-translationally, predicted to be exported by the Tat system. The position of the signal peptide cleavage has not been experimentally proven.

The protein resides in the periplasm. It carries out the reaction L-methionyl-[protein] + a quinone + H2O = L-methionyl-(S)-S-oxide-[protein] + a quinol. The enzyme catalyses L-methionyl-[protein] + a quinone + H2O = L-methionyl-(R)-S-oxide-[protein] + a quinol. Its function is as follows. Part of the MsrPQ system that repairs oxidized periplasmic proteins containing methionine sulfoxide residues (Met-O), using respiratory chain electrons. Thus protects these proteins from oxidative-stress damage caused by reactive species of oxygen and chlorine generated by the host defense mechanisms. MsrPQ is essential for the maintenance of envelope integrity under bleach stress, rescuing a wide series of structurally unrelated periplasmic proteins from methionine oxidation. The catalytic subunit MsrP is non-stereospecific, being able to reduce both (R-) and (S-) diastereoisomers of methionine sulfoxide. In Pasteurella multocida (strain Pm70), this protein is Protein-methionine-sulfoxide reductase catalytic subunit MsrP.